A 318-amino-acid chain; its full sequence is Beta-galactosidase small subunit (318 aa).

The protein belongs to the bacterial beta-galactosidase small subunit family. In terms of assembly, heterodimer of a large (LacL) and a small subunit (LacM).

The enzyme catalyses Hydrolysis of terminal non-reducing beta-D-galactose residues in beta-D-galactosides.. In terms of biological role, component of a beta-galactosidase. This is Beta-galactosidase small subunit from Latilactobacillus sakei (Lactobacillus sakei).